Reading from the N-terminus, the 132-residue chain is Profilin-1 (132 aa).

It belongs to the profilin family. As to quaternary structure, occurs in many kinds of cells as a complex with monomeric actin in a 1:1 ratio. As to expression, expressed in the nerve ring during late embryonic stages. In adults, expression is seen in the neurons, vulva and somatic gonad.

Its subcellular location is the cytoplasm. It is found in the cytoskeleton. In terms of biological role, binds to actin and affects the structure of the cytoskeleton. At high concentrations, profilin prevents the polymerization of actin, whereas it enhances it at low concentrations. By binding to PIP2, it inhibits the formation of IP3 and DG. Also binds to poly(L-proline) and phosphatidylinositol 4,5-bisphosphate micelles. The chain is Profilin-1 (pfn-1) from Caenorhabditis elegans.